Consider the following 67-residue polypeptide: Small ribosomal subunit protein eS31 (67 aa).

The Zn(2+) site is built by Cys-35, Cys-38, Cys-54, and Cys-57. The segment at 35 to 57 (CPRCGSIMAHHMKPLERWACGKC) adopts a C4-type zinc-finger fold.

It belongs to the eukaryotic ribosomal protein eS31 family. Part of the 30S ribosomal subunit. Zn(2+) is required as a cofactor.

In Sulfolobus acidocaldarius (strain ATCC 33909 / DSM 639 / JCM 8929 / NBRC 15157 / NCIMB 11770), this protein is Small ribosomal subunit protein eS31.